The chain runs to 469 residues: MNPNQKIITIGSICMVIGIVSLMLQIGNIISIWVSHSIQTGNQHQAEPCNQSIITYENNTWVNQTYVNISNTNFLTEKAVASVTLAGNSSLCPISGWAVYSKDNGIRIGSKGDVFVIREPFISCSHLECRTFFLTQGALLNDKHSNGTVKDRSPYRTLMSCPVGEAPSPYNSRFESVAWSASACHDGTSWLTIGISGPDNGAVAVLKYNGIITDTIKSWRNNILRTQESECACVNGSCFTVMTDGPSNGQASYKIFKIEKGKVVKSVELNAPNYHYEECSCYPDAGEITCVCRDNWHGSNRPWVSFNQNLEYQIGYICSGVFGDNPRPNDGTGSCGPVSPNGAYGIKGFSFKYGNGVWIGRTKSTNSRSGFEMIWDPNGWTGTDSNFSVKQDIVAITDWSGYSGSFVQHPELTGVDCIRPCFWVELIRGRPKESTIWTSGSSISFCGVNSDTVGWSWPDGAELPFTIDK.

Residues 1–6 (MNPNQK) are Intravirion-facing. Residues 7 to 27 (IITIGSICMVIGIVSLMLQIG) form a helical membrane-spanning segment. The tract at residues 11–33 (GSICMVIGIVSLMLQIGNIISIW) is involved in apical transport and lipid raft association. The Virion surface portion of the chain corresponds to 28–469 (NIISIWVSHS…GAELPFTIDK (442 aa)). Residues 36 to 90 (HSIQTGNQHQAEPCNQSIITYENNTWVNQTYVNISNTNFLTEKAVASVTLAGNSS) are hypervariable stalk region. N-linked (GlcNAc...) asparagine; by host glycans are attached at residues Asn50, Asn58, Asn63, Asn68, and Asn88. The tract at residues 91 to 469 (LCPISGWAVY…GAELPFTIDK (379 aa)) is head of neuraminidase. 8 cysteine pairs are disulfide-bonded: Cys92/Cys417, Cys124/Cys129, Cys184/Cys231, Cys233/Cys238, Cys279/Cys292, Cys281/Cys290, Cys318/Cys335, and Cys421/Cys446. Arg118 lines the substrate pocket. Asn146 is a glycosylation site (N-linked (GlcNAc...) asparagine; by host). Asp151 serves as the catalytic Proton donor/acceptor. Arg152 contacts substrate. Residue Asn235 is glycosylated (N-linked (GlcNAc...) asparagine; by host). 277 to 278 (EE) is a binding site for substrate. Arg293 lines the substrate pocket. The Ca(2+) site is built by Asp294, Gly298, and Asp324. Residue Arg368 participates in substrate binding. An N-linked (GlcNAc...) asparagine; by host glycan is attached at Asn386. Residue Tyr402 is the Nucleophile of the active site.

It belongs to the glycosyl hydrolase 34 family. In terms of assembly, homotetramer. Ca(2+) serves as cofactor. In terms of processing, N-glycosylated.

The protein resides in the virion membrane. It is found in the host apical cell membrane. It catalyses the reaction Hydrolysis of alpha-(2-&gt;3)-, alpha-(2-&gt;6)-, alpha-(2-&gt;8)- glycosidic linkages of terminal sialic acid residues in oligosaccharides, glycoproteins, glycolipids, colominic acid and synthetic substrates.. Its activity is regulated as follows. Inhibited by the neuraminidase inhibitors zanamivir (Relenza) and oseltamivir (Tamiflu). These drugs interfere with the release of progeny virus from infected cells and are effective against all influenza strains. Resistance to neuraminidase inhibitors is quite rare. Functionally, catalyzes the removal of terminal sialic acid residues from viral and cellular glycoconjugates. Cleaves off the terminal sialic acids on the glycosylated HA during virus budding to facilitate virus release. Additionally helps virus spread through the circulation by further removing sialic acids from the cell surface. These cleavages prevent self-aggregation and ensure the efficient spread of the progeny virus from cell to cell. Otherwise, infection would be limited to one round of replication. Described as a receptor-destroying enzyme because it cleaves a terminal sialic acid from the cellular receptors. May facilitate viral invasion of the upper airways by cleaving the sialic acid moieties on the mucin of the airway epithelial cells. Likely to plays a role in the budding process through its association with lipid rafts during intracellular transport. May additionally display a raft-association independent effect on budding. Plays a role in the determination of host range restriction on replication and virulence. Sialidase activity in late endosome/lysosome traffic seems to enhance virus replication. The chain is Neuraminidase from Aves (Cat).